The chain runs to 106 residues: Biogenesis of lysosome-related organelles complex 1 subunit BLS1 (106 aa).

This sequence belongs to the BLOC1S1 family. Component of the biogenesis of lysosome-related organelles complex-1 (BLOC-1).

It localises to the endosome. Its function is as follows. Component of the biogenesis of lysosome-related organelles complex-1 (BLOC-1), a complex involved in endosomal cargo sorting. This is Biogenesis of lysosome-related organelles complex 1 subunit BLS1 (BLS1) from Candida glabrata (strain ATCC 2001 / BCRC 20586 / JCM 3761 / NBRC 0622 / NRRL Y-65 / CBS 138) (Yeast).